The primary structure comprises 864 residues: Dynamin-1 (864 aa).

In terms of domain architecture, Dynamin-type G spans 28 to 294 (DLDLPQIAVV…LTNHIRDTLP (267 aa)). Positions 38 to 45 (GGQSAGKS) are G1 motif. Ser41, Gly43, Lys44, Ser45, Ser46, Arg59, and Gly60 together coordinate GDP. The segment at 64-66 (VTR) is G2 motif. Tyr80 carries the phosphotyrosine modification. 3'-nitrotyrosine; alternate is present on Tyr125. Tyr125 carries the post-translational modification Phosphotyrosine; alternate. The tract at residues 136 to 139 (DLPG) is G3 motif. The G4 motif stretch occupies residues 205 to 208 (TKLD). 6 residues coordinate GDP: Lys206, Asp208, Asp211, Asn236, Arg237, and Gln239. Residues 235-238 (VNRS) are G5 motif. Phosphoserine is present on residues Ser306 and Ser347. Tyr354 bears the Phosphotyrosine mark. A Phosphoserine modification is found at Ser512. In terms of domain architecture, PH spans 519–625 (LVIRKGWLTI…WKASFLRAGV (107 aa)). A GED domain is found at 659–750 (VETIRNLVDS…IIGDINTTTV (92 aa)). The disordered stretch occupies residues 767–864 (SVPAGRRSPT…PESPRPPFDL (98 aa)). At Ser774 the chain carries Phosphoserine; by GSK3-beta. Ser778 is modified (phosphoserine). The residue at position 796 (Arg796) is an Omega-N-methylarginine. Residue Ser822 is modified to Phosphoserine. A compositionally biased stretch (pro residues) spans 825 to 843 (PFGPPPQVPSRPNRAPPGV). Phosphoserine occurs at positions 851 and 857.

The protein belongs to the TRAFAC class dynamin-like GTPase superfamily. Dynamin/Fzo/YdjA family. Homodimer; homodimerization is mediated by the dynamin-type G domain which promotes assembly-stimulated GTPase activity. Homo-tetramer formed from two dimers in the absence of lipid. Oligomerizes into a helical polymer that self-assembles around the vesicle membrane, when associated to the menbrane through lipid binding. Interacts (via C-terminal proline-rich domain (PRD)) with SNX9 (via SH3 domain); this interaction allows regulation of DNM1 self-assembly during late stages of endocytic vesicle formation and supports DNM1's early functions in accelerating clathrin-coated pits (CCPs) maturation in non neuronals cell. Interacts (via C-terminal proline-rich domain (PRD)) with MYO1E (via SH3 domain); this interaction regulates receptor-mediated endocytosis. Interacts with SNX33 (via SH3 domain); this interaction decreases DNM1-dependent endocytosis. Interacts with DIAPH1. Interacts with GRB2 (via SH3 domain); this interaction mediates disassembly of DNM1 polymers, therefore modulates self-assembly. Forms a complex with BIN1 (via SH3 domain) and SH3GL2 (via SH3 domain). Forms a complex with SH3GL2 (via SH3 domain) and AMPH (via SH3 domain). Forms a complex with SH3GL2 (via SH3 domain) and SYNJ1. Interacts with AMPH. Interacts (via C-terminal proline-rich domain (PRD)) with SYT1; this interaction facilitates vesicle fission during clathrin-mediated endocytosis (CME). Interacts (via C-terminal proline-rich domain (PRD)) with PLCG1 (via SH3 domain); this interaction stimulates the release of GDP from DNM1 and enhances DNM1-dependent endocytosis. Interacts with SNPH; this interaction inhibits the binding of DNM1 to AMPH and DNM1-receptor-mediated endocytosis. Interacts with CAV1. Interacts with SH3GLB1 (via SH3 domain). Interacts with PACSIN1 (via SH3 domain), PACSIN2 (via SH3 domain) and PACSIN3 (via SH3 domain). Interacts with UNC119; this interaction decreases DNM1's GTPase activity and affects DNM1's interaction with AMPH. Interacts (GTP-bound form) with DNAJC6; this interaction allows clathrin-coated vesicle (CCV) formation at the plasma membrane. In terms of processing, phosphorylation at Ser-774 by GSK3B/GSK3-beta leads to inactivation of receptor-mediated endocytosis in non-neuronal cells. Dephosphorylation at Ser-774, through the EGFR downstream signaling, leads to activation and regulates early stages of clathrin-mediated endocytosis (CME). Phosphorylated by CDK5 leading to synaptic vesicle endocytosis (SVE) activation.

Its subcellular location is the cell membrane. It is found in the membrane. The protein resides in the clathrin-coated pit. The protein localises to the cytoplasmic vesicle. It localises to the presynapse. Its subcellular location is the secretory vesicle. It is found in the chromaffin granule. The catalysed reaction is GTP + H2O = GDP + phosphate + H(+). With respect to regulation, GTPase activity is activated by 1-phosphatidyl-1D-myo-inositol 4,5-bisphosphate. GTPase activity is inhibited by the heterodimer G protein formed by GNB1 and GNG2 with an IC(50)=400 nM when DNM1 concentration is 5 nM. Catalyzes the hydrolysis of GTP and utilizes this energy to mediate vesicle scission and participates in many forms of endocytosis, such as clathrin-mediated endocytosis or synaptic vesicle endocytosis as well as rapid endocytosis (RE). Associates to the membrane, through lipid binding, and self-assembles into rings and stacks of interconnected rings through oligomerization to form a helical polymer around the vesicle membrane leading to constriction of invaginated coated pits around their necks. Self-assembly of the helical polymer induces membrane tubules narrowing until the polymer reaches a length sufficient to trigger GTP hydrolysis. Depending on the curvature imposed on the tubules, membrane detachment from the helical polymer upon GTP hydrolysis can cause spontaneous hemifission followed by complete fission. May play a role in regulating early stages of clathrin-mediated endocytosis in non-neuronal cells through its activation by dephosphorylation via the signaling downstream of EGFR. Controls vesicle size at a step before fission, during formation of membrane pits, at hippocampal synapses. Controls plastic adaptation of the synaptic vesicle recycling machinery to high levels of activity. Mediates rapid endocytosis (RE), a Ca(2+)-dependent and clathrin- and K(+)-independent process in chromaffin cells. Microtubule-associated force-producing protein involved in producing microtubule bundles and able to bind and hydrolyze GTP. Through its interaction with DNAJC6, acts during the early steps of clathrin-coated vesicle (CCV) formation. The chain is Dynamin-1 from Homo sapiens (Human).